The following is a 753-amino-acid chain: MTIRSPEPEVKKVKVVVDRDTVKTSFEKWAKPGHFSRTLAKGPDTTTWIWNLHADAHDFDSHTNNLEDISRKIFSAHFGQLAIIFIWLSGMYYHGARFSNYEAWLADPTHIKPSAQIVWPIVGQEILNGDVGGGFRGIQITSGFFQIWRASGITSELQLYCTAIGALIFAALMLFAGWFHYHKAAPKLAWFQEVESMLNHHLAGLLGLGSLSWAGHQIHVSLPINQLLDAGVDPKEIPLPHEFIFNRDLLAQLYPSFAKGVTPFLTLNWSEYSDFLTFRGGLNPVTGGLWLTDTAHHHLAIAVLFLIAGHMYKTNWRIGHNLKDLLEAHKGPFTGEGHKGLYEILTTSWHAQLAVNLAMLGSLTIVVAHHMYSMPPYPYLATDYGTQLSLFTHHMWIGGFIIVGAAAHAAIFMVRDYDPTTQYNNLLDRVLRHRDAIVSHLNWVCIFLGFHSFGLYIHNDTMSALGRPQDMFSDTAIQLQPIFAQWIQNTHASAPGSTAPGATASTSLTWGGGDLVTVGSKVALLPIPLGTADFLVHHIHAFTIHVTVLILLKGVLFARSSRLIPDKANLGFRFPCDGPGRGGTCQVSAWDHVFLGLFWMYNAISVVIFHFSWKMQSDVWGNISDQGVVTHITGGNFAQSSITINGWLRDFLWAQASQVIQSYGSSLSAYGLLFLGAHFVWAFSLMFLFSGRGYWQELIESIVWAHNKLKVAPAIQPRALSIVQGRAVGVAHYLLGGIVTTWAFFLARIIAIG.

The next 8 helical transmembrane spans lie at 73–96 (IFSAHFGQLAIIFIWLSGMYYHGA), 159–182 (LYCTAIGALIFAALMLFAGWFHYH), 198–222 (LNHHLAGLLGLGSLSWAGHQIHVSL), 294–312 (TAHHHLAIAVLFLIAGHMY), 349–372 (WHAQLAVNLAMLGSLTIVVAHHMY), 388–414 (LSLFTHHMWIGGFIIVGAAAHAAIFMV), 436–458 (AIVSHLNWVCIFLGFHSFGLYIH), and 534–552 (FLVHHIHAFTIHVTVLILL). The [4Fe-4S] cluster site is built by Cys-576 and Cys-585. 2 helical membrane passes run 592–613 (HVFLGLFWMYNAISVVIFHFSW) and 667–689 (LSAYGLLFLGAHFVWAFSLMFLF). His-678 is a chlorophyll a' binding site. Chlorophyll a contacts are provided by Met-686 and Tyr-694. Trp-695 lines the phylloquinone pocket. A helical membrane pass occupies residues 727 to 747 (AVGVAHYLLGGIVTTWAFFLA).

The protein belongs to the PsaA/PsaB family. In terms of assembly, the PsaA/B heterodimer binds the P700 chlorophyll special pair and subsequent electron acceptors. PSI consists of a core antenna complex that captures photons, and an electron transfer chain that converts photonic excitation into a charge separation. The eukaryotic PSI reaction center is composed of at least 11 subunits. Requires P700 is a chlorophyll a/chlorophyll a' dimer, A0 is one or more chlorophyll a, A1 is one or both phylloquinones and FX is a shared 4Fe-4S iron-sulfur center. as cofactor.

The protein resides in the plastid. It localises to the chloroplast thylakoid membrane. The enzyme catalyses reduced [plastocyanin] + hnu + oxidized [2Fe-2S]-[ferredoxin] = oxidized [plastocyanin] + reduced [2Fe-2S]-[ferredoxin]. Its function is as follows. PsaA and PsaB bind P700, the primary electron donor of photosystem I (PSI), as well as the electron acceptors A0, A1 and FX. PSI is a plastocyanin-ferredoxin oxidoreductase, converting photonic excitation into a charge separation, which transfers an electron from the donor P700 chlorophyll pair to the spectroscopically characterized acceptors A0, A1, FX, FA and FB in turn. Oxidized P700 is reduced on the lumenal side of the thylakoid membrane by plastocyanin. In Pinus thunbergii (Japanese black pine), this protein is Photosystem I P700 chlorophyll a apoprotein A1.